The sequence spans 305 residues: Syntaxin-123 (305 aa).

Met1 is subject to N-acetylmethionine. Topologically, residues 1-278 (MNDLISSSFK…KVLQRNNRKW (278 aa)) are cytoplasmic. The stretch at 46 to 66 (VKEDMKAVDEIHKRLQDANEE) forms a coiled coil. Residues 206-268 (LSEIQERHDT…MRGTDQLHGA (63 aa)) form the t-SNARE coiled-coil homology domain. Residues 279–299 (ACIATILAIVVVIVILFPILF) form a helical; Anchor for type IV membrane protein membrane-spanning segment. Residues 300–305 (NTLLRP) are Vesicular-facing.

It belongs to the syntaxin family. In terms of assembly, part of the t-SNARE complex. As to expression, expressed in tips of root hairs.

It localises to the membrane. Vesicle trafficking protein that functions in the secretory pathway. Acts in coordination with SYP132 to mediate tip-focused membrane trafficking for root hair tip growth. Functions in root hair elongation by forming SNARE complexes with VAMP721,VAMP722 or VAMP724. This Arabidopsis thaliana (Mouse-ear cress) protein is Syntaxin-123.